We begin with the raw amino-acid sequence, 260 residues long: 3-dehydroquinate dehydratase (260 aa).

3-dehydroquinate contacts are provided by residues 50–52 (EWR) and Arg86. The active-site Proton donor/acceptor is His148. Lys175 acts as the Schiff-base intermediate with substrate in catalysis. 3-dehydroquinate is bound by residues Arg217, Ser236, and Gln240.

The protein belongs to the type-I 3-dehydroquinase family. Homodimer.

It catalyses the reaction 3-dehydroquinate = 3-dehydroshikimate + H2O. It participates in metabolic intermediate biosynthesis; chorismate biosynthesis; chorismate from D-erythrose 4-phosphate and phosphoenolpyruvate: step 3/7. Functionally, involved in the third step of the chorismate pathway, which leads to the biosynthesis of aromatic amino acids. Catalyzes the cis-dehydration of 3-dehydroquinate (DHQ) and introduces the first double bond of the aromatic ring to yield 3-dehydroshikimate. The sequence is that of 3-dehydroquinate dehydratase from Aromatoleum aromaticum (strain DSM 19018 / LMG 30748 / EbN1) (Azoarcus sp. (strain EbN1)).